A 397-amino-acid polypeptide reads, in one-letter code: Elongation factor Tu (397 aa).

One can recognise a tr-type G domain in the interval 10–207; it reads KPHVNIGTIG…VLDEYVKEPV (198 aa). The G1 stretch occupies residues 19 to 26; that stretch reads GHIDHGKT. A GTP-binding site is contributed by 19–26; it reads GHIDHGKT. Thr26 contacts Mg(2+). Residues 60 to 64 form a G2 region; the sequence is GITIS. The segment at 81-84 is G3; it reads DCPG. GTP-binding positions include 81 to 85 and 136 to 139; these read DCPGH and NKCD. Residues 136 to 139 form a G4 region; it reads NKCD. The interval 174–176 is G5; that stretch reads SAL.

Belongs to the TRAFAC class translation factor GTPase superfamily. Classic translation factor GTPase family. EF-Tu/EF-1A subfamily. Monomer.

The protein localises to the cytoplasm. It catalyses the reaction GTP + H2O = GDP + phosphate + H(+). In terms of biological role, GTP hydrolase that promotes the GTP-dependent binding of aminoacyl-tRNA to the A-site of ribosomes during protein biosynthesis. The polypeptide is Elongation factor Tu (Desulforapulum autotrophicum (strain ATCC 43914 / DSM 3382 / VKM B-1955 / HRM2) (Desulfobacterium autotrophicum)).